The following is a 119-amino-acid chain: Fluoride-specific ion channel FluC (119 aa).

The next 4 helical transmembrane spans lie at 5–25 (IIPL…LNLA), 34–54 (TGNL…AETI), 59–79 (WKLL…GFSL), and 97–117 (IFLH…IGAA). Residues Gly-69 and Thr-72 each coordinate Na(+).

It belongs to the fluoride channel Fluc/FEX (TC 1.A.43) family.

The protein resides in the cell inner membrane. The catalysed reaction is fluoride(in) = fluoride(out). Its activity is regulated as follows. Na(+) is not transported, but it plays an essential structural role and its presence is essential for fluoride channel function. In terms of biological role, fluoride-specific ion channel. Important for reducing fluoride concentration in the cell, thus reducing its toxicity. This chain is Fluoride-specific ion channel FluC, found in Neisseria meningitidis serogroup C / serotype 2a (strain ATCC 700532 / DSM 15464 / FAM18).